Here is a 355-residue protein sequence, read N- to C-terminus: Phosphoserine aminotransferase (355 aa).

R41 contacts L-glutamate. Residues 75–76, W99, T147, D166, and Q189 each bind pyridoxal 5'-phosphate; that span reads AS. The residue at position 190 (K190) is an N6-(pyridoxal phosphate)lysine. 231-232 contributes to the pyridoxal 5'-phosphate binding site; sequence NT.

The protein belongs to the class-V pyridoxal-phosphate-dependent aminotransferase family. SerC subfamily. Homodimer. Requires pyridoxal 5'-phosphate as cofactor.

The protein localises to the cytoplasm. The catalysed reaction is O-phospho-L-serine + 2-oxoglutarate = 3-phosphooxypyruvate + L-glutamate. It carries out the reaction 4-(phosphooxy)-L-threonine + 2-oxoglutarate = (R)-3-hydroxy-2-oxo-4-phosphooxybutanoate + L-glutamate. Its pathway is amino-acid biosynthesis; L-serine biosynthesis; L-serine from 3-phospho-D-glycerate: step 2/3. It participates in cofactor biosynthesis; pyridoxine 5'-phosphate biosynthesis; pyridoxine 5'-phosphate from D-erythrose 4-phosphate: step 3/5. Its function is as follows. Catalyzes the reversible conversion of 3-phosphohydroxypyruvate to phosphoserine and of 3-hydroxy-2-oxo-4-phosphonooxybutanoate to phosphohydroxythreonine. This chain is Phosphoserine aminotransferase, found in Bacteroides fragilis (strain ATCC 25285 / DSM 2151 / CCUG 4856 / JCM 11019 / LMG 10263 / NCTC 9343 / Onslow / VPI 2553 / EN-2).